We begin with the raw amino-acid sequence, 2871 residues long: Fibrillin-1 (2871 aa).

The signal sequence occupies residues 1-24 (MRRGRLLEIALGFTVLLASYTSHG). A propeptide spanning residues 25 to 44 (ADANLEAGNVKETRASRAKR) is cleaved from the precursor. Residues 45-81 (RGGGGHDALKGPNVCGSRYNAYCCPGWKTLPGGNQCI) form a fibrillin unique N-terminal (FUN) domain region. The N-terminal domain stretch occupies residues 45-450 (RGGGGHDALK…PPRVLPVNVT (406 aa)). Disulfide bonds link Cys59–Cys68, Cys67–Cys80, Cys85–Cys94, Cys89–Cys100, Cys102–Cys111, Cys119–Cys129, Cys123–Cys134, Cys136–Cys145, Cys150–Cys160, Cys154–Cys166, and Cys168–Cys177. EGF-like domains are found at residues 81–112 (IVPICRHSCGDGFCSRPNMCTCPSGQIAPSCG), 115–146 (SIQHCNIRCMNGGSCSDDHCLCQKGYIGTHCG), and 147–178 (QPVCESGCLNGGRCVAPNRCACTYGFTGPQCE). An interaction with MFAP4 region spans residues 119–329 (CNIRCMNGGS…YTSPDGTRCI (211 aa)). Residues 184–236 (GPCFTVISNQMCQGQLSGIVCTKTLCCATVGRAWGHPCEMCPAQPHPCRRGFI) enclose the TB 1 domain. The tract at residues 195–221 (CQGQLSGIVCTKTLCCATVGRAWGHPC) is hybrid domain 1. The 42-residue stretch at 246-287 (DVDECQAIPGLCQGGNCINTVGSFECKCPAGHKLNEVSQKCE) folds into the EGF-like 4; calcium-binding domain. 6 cysteine pairs are disulfide-bonded: Cys250-Cys262, Cys257-Cys271, Cys273-Cys286, Cys292-Cys304, Cys299-Cys313, and Cys315-Cys328. Ser268 carries O-linked (Glc) serine glycosylation. The EGF-like 5; calcium-binding domain occupies 288-329 (DIDECSTIPGICEGGECTNTVSSYFCKCPPGFYTSPDGTRCI). One can recognise a TB 2 domain in the interval 334-389 (GYCYTALTNGRCSNQLPQSITKMQCCCDAGRCWSPGVTVAPEMCPIRATEDFNKLC). An N-linked (GlcNAc...) asparagine glycan is attached at Asn448. The EGF-like 6 domain occupies 449–489 (VTDYCQLVRYLCQNGRCIPTPGSYRCECNKGFQLDLRGECI). 15 disulfide bridges follow: Cys453-Cys465, Cys460-Cys474, Cys476-Cys488, Cys494-Cys504, Cys499-Cys513, Cys515-Cys528, Cys534-Cys546, Cys541-Cys555, Cys557-Cys570, Cys576-Cys587, Cys582-Cys596, Cys598-Cys611, Cys617-Cys628, Cys623-Cys637, and Cys639-Cys652. O-linked (Glc) serine glycosylation is present at Ser471. The 40-residue stretch at 490 to 529 (DVDECEKNPCAGGECINNQGSYTCQCRAGYQSTLTRTECR) folds into the EGF-like 7; calcium-binding domain. Ser510 carries an O-linked (Glc) serine glycan. In terms of domain architecture, EGF-like 8; calcium-binding spans 530–571 (DIDECLQNGRICNNGRCINTDGSFHCVCNAGFHVTRDGKNCE). The O-linked (Glc) serine glycan is linked to Ser552. The EGF-like 9; calcium-binding domain maps to 572–612 (DMDECSIRNMCLNGMCINEDGSFKCICKPGFQLASDGRYCK). O-linked (Glc) serine glycosylation is present at Ser593. The 41-residue stretch at 613 to 653 (DINECETPGICMNGRCVNTDGSYRCECFPGLAVGLDGRVCV) folds into the EGF-like 10; calcium-binding domain. An O-linked (Glc) serine glycan is attached at Ser634. The 53-residue stretch at 659 to 711 (STCYGGYKRGQCIKPLFGAVTKSECCCASTEYAFGEPCQPCPAQNSAEYQALC) folds into the TB 3 domain. An EGF-like 11; calcium-binding domain is found at 723 to 764 (DINECALDPDICPNGICENLRGTYKCICNSGYEVDSTGKNCV). Disulfide bonds link Cys727/Cys739, Cys734/Cys748, Cys750/Cys763, Cys769/Cys781, Cys776/Cys790, Cys792/Cys805, Cys811/Cys821, Cys816/Cys830, Cys832/Cys845, Cys853/Cys875, Cys862/Cys887, Cys876/Cys890, Cys896/Cys908, Cys914/Cys926, Cys921/Cys935, and Cys937/Cys950. One can recognise an EGF-like 12; calcium-binding domain in the interval 765–806 (DINECVLNSLLCDNGQCRNTPGSFVCTCPKGFIYKPDLKTCE). Ser787 carries O-linked (Glc) serine glycosylation. In terms of domain architecture, EGF-like 13; calcium-binding spans 807–846 (DIDECESSPCINGVCKNSPGSFICECSSESTLDPTKTICI). Ser827 carries an O-linked (Glc) serine glycan. Residues 851 to 902 (GTCWQTVIDGRCEININGATLKSQCCSSLGAAWGSPCTLCQVDPICGKGYSR) form the TB 4 domain. Positions 862–887 (CEININGATLKSQCCSSLGAAWGSPC) are hybrid domain 2. In terms of domain architecture, EGF-like 14; calcium-binding spans 910 to 951 (DIDECEVFPGVCKNGLCVNTRGSFKCQCPSGMTLDATGRICL). Residues 956-1008 (ETCFLRYEDEECTLPIAGRHRMDACCCSVGAAWGTEECEECPMRNTPEYEELC) form the TB 5 domain. The 42-residue stretch at 1028–1069 (DINECKMIPSLCTHGKCRNTIGSFKCRCDSGFALDSEERNCT) folds into the EGF-like 15; calcium-binding domain. 46 cysteine pairs are disulfide-bonded: Cys1032–Cys1044, Cys1039–Cys1053, Cys1055–Cys1068, Cys1074–Cys1086, Cys1081–Cys1095, Cys1097–Cys1111, Cys1117–Cys1129, Cys1124–Cys1138, Cys1140–Cys1153, Cys1159–Cys1171, Cys1166–Cys1180, Cys1182–Cys1195, Cys1201–Cys1212, Cys1208–Cys1221, Cys1223–Cys1236, Cys1242–Cys1254, Cys1249–Cys1263, Cys1265–Cys1278, Cys1284–Cys1296, Cys1291–Cys1305, Cys1307–Cys1320, Cys1326–Cys1339, Cys1333–Cys1348, Cys1350–Cys1361, Cys1367–Cys1380, Cys1374–Cys1389, Cys1391–Cys1402, Cys1408–Cys1420, Cys1415–Cys1429, Cys1431–Cys1444, Cys1450–Cys1461, Cys1456–Cys1470, Cys1472–Cys1485, Cys1491–Cys1502, Cys1497–Cys1511, Cys1513–Cys1526, Cys1534–Cys1562, Cys1549–Cys1574, Cys1563–Cys1577, Cys1564–Cys1589, Cys1610–Cys1622, Cys1617–Cys1631, Cys1633–Cys1646, Cys1652–Cys1663, Cys1658–Cys1672, and Cys1674–Cys1687. O-linked (Glc) serine glycosylation occurs at Ser1050. The N-linked (GlcNAc...) asparagine glycan is linked to Asn1067. Residues 1070–1112 (DIDECRISPDLCGRGQCVNTPGDFECKCDEGYESGFMMMKNCM) form the EGF-like 16; calcium-binding domain. The 42-residue stretch at 1113-1154 (DIDECQRDPLLCRGGVCHNTEGSYRCECPPGHQLSPNISACI) folds into the EGF-like 17; calcium-binding domain. Ser1135 carries O-linked (Glc) serine glycosylation. A glycan (N-linked (GlcNAc...) asparagine) is linked at Asn1149. One can recognise an EGF-like 18; calcium-binding domain in the interval 1155–1196 (DINECELSAHLCPNGRCVNLIGKYQCACNPGYHSTPDRLFCV). Residues 1197–1237 (DIDECSIMNGGCETFCTNSEGSYECSCQPGFALMPDQRSCT) form the EGF-like 19; calcium-binding domain. Residue Ser1218 is glycosylated (O-linked (Glc) serine). The EGF-like 20; calcium-binding domain occupies 1238–1279 (DIDECEDNPNICDGGQCTNIPGEYRCLCYDGFMASEDMKTCV). The 42-residue stretch at 1280 to 1321 (DVNECDLNPNICLSGTCENTKGSFICHCDMGYSGKKGKTGCT) folds into the EGF-like 21; calcium-binding domain. Residue Ser1302 is glycosylated (O-linked (Glc) serine). One can recognise an EGF-like 22; calcium-binding domain in the interval 1322–1362 (DINECEIGAHNCGKHAVCTNTAGSFKCSCSPGWIGDGIKCT). Ser1345 carries an O-linked (Glc) serine glycan. One can recognise an EGF-like 23; calcium-binding domain in the interval 1363–1403 (DLDECSNGTHMCSQHADCKNTMGSYRCLCKEGYTGDGFTCT). Asn1369 carries an N-linked (GlcNAc...) asparagine glycan. The O-linked (Glc) serine glycan is linked to Ser1386. The EGF-like 24; calcium-binding domain occupies 1404–1445 (DLDECSENLNLCGNGQCLNAPGGYRCECDMGFVPSADGKACE). An EGF-like 25; calcium-binding domain is found at 1446–1486 (DIDECSLPNICVFGTCHNLPGLFRCECEIGYELDRSGGNCT). N-linked (GlcNAc...) asparagine glycosylation occurs at Asn1484. One can recognise an EGF-like 26; calcium-binding domain in the interval 1487–1527 (DVNECLDPTTCISGNCVNTPGSYICDCPPDFELNPTRVGCV). An O-linked (Glc) serine glycan is attached at Ser1508. Residues 1528–2731 (DTRSGNCYLD…GYPKRGRKRR (1204 aa)) form a C-terminal domain region. The TB 6 domain maps to 1532-1589 (GNCYLDIRPRGDNGDTACSNEIGVGVSKASCCCSLGKAWGTPCEMCPAVNTSEYKILC). Residues 1541–1543 (RGD) carry the Cell attachment site motif. Asn1581 is a glycosylation site (N-linked (GlcNAc...) asparagine). Residues 1606–1647 (DIDECQELPGLCQGGKCINTFGSFQCRCPTGYYLNEDTRVCD) form the EGF-like 27; calcium-binding domain. O-linked (Glc) serine glycosylation is present at Ser1628. The EGF-like 28; calcium-binding domain occupies 1648–1688 (DVNECETPGICGPGTCYNTVGNYTCICPPDYMQVNGGNNCM). Asn1669 is a glycosylation site (N-linked (GlcNAc...) asparagine). A TB 7 domain is found at 1693 to 1748 (SLCYRNYYADNQTCDGELLFNMTKKMCCCSYNIGRAWNKPCEQCPIPSTDEFATLC). N-linked (GlcNAc...) asparagine glycans are attached at residues Asn1703 and Asn1713. The region spanning 1766–1807 (DIDECREIPGVCENGVCINMVGSFRCECPVGFFYNDKLLVCE) is the EGF-like 29; calcium-binding domain. Cystine bridges form between Cys1770–Cys1782, Cys1777–Cys1791, Cys1793–Cys1806, Cys1812–Cys1824, Cys1818–Cys1833, Cys1835–Cys1847, Cys1853–Cys1865, Cys1860–Cys1874, Cys1876–Cys1889, Cys1895–Cys1905, Cys1900–Cys1914, Cys1916–Cys1928, Cys1934–Cys1947, Cys1942–Cys1956, Cys1958–Cys1971, Cys1977–Cys1989, Cys1984–Cys1998, Cys2000–Cys2011, Cys2017–Cys2029, Cys2024–Cys2038, Cys2040–Cys2053, Cys2061–Cys2083, Cys2070–Cys2096, Cys2084–Cys2099, Cys2085–Cys2111, Cys2131–Cys2142, Cys2137–Cys2151, Cys2153–Cys2164, Cys2170–Cys2181, Cys2176–Cys2190, Cys2192–Cys2204, Cys2210–Cys2221, Cys2217–Cys2230, Cys2232–Cys2245, Cys2251–Cys2265, Cys2258–Cys2274, Cys2276–Cys2289, Cys2295–Cys2307, Cys2302–Cys2316, and Cys2318–Cys2331. The region spanning 1808 to 1848 (DIDECQNGPVCQRNAECINTAGSYRCDCKPGYRFTSTGQCN) is the EGF-like 30; calcium-binding domain. Ser1830 carries O-linked (Glc) serine glycosylation. Positions 1849-1890 (DRNECQEIPNICSHGQCIDTVGSFYCLCHTGFKTNDDQTMCL) constitute an EGF-like 31; calcium-binding domain. An O-linked (Glc) serine glycan is attached at Ser1871. The 39-residue stretch at 1891-1929 (DINECERDACGNGTCRNTIGSFNCRCNHGFILSHNNDCI) folds into the EGF-like 32; calcium-binding domain. Asn1902 is a glycosylation site (N-linked (GlcNAc...) asparagine). Residue Ser1911 is glycosylated (O-linked (Glc) serine). The region spanning 1930-1972 (DVDECASGNGNLCRNGQCINTVGSFQCQCNEGYEVAPDGRTCV) is the EGF-like 33; calcium-binding domain. Ser1953 carries O-linked (Glc) serine glycosylation. The 40-residue stretch at 1973 to 2012 (DINECLLEPRKCAPGTCQNLDGSYRCICPPGYSLQNEKCE) folds into the EGF-like 34; calcium-binding domain. An EGF-like 35; calcium-binding domain is found at 2013–2054 (DIDECVEEPEICALGTCSNTEGSFKCLCPEGFSLSSSGRRCQ). Ser2035 carries an O-linked (Glc) serine glycan. Residues 2059–2111 (SYCYAKFEGGKCSSPKSRNHSKQECCCALKGEGWGDPCELCPTEPDEAFRQIC) enclose the TB 8 domain. Residue Asn2077 is glycosylated (N-linked (GlcNAc...) asparagine). The 39-residue stretch at 2127 to 2165 (DMDECKEPDVCKHGQCINTDGSYRCECPFGYILAGNECV) folds into the EGF-like 36; calcium-binding domain. O-linked (Glc) serine glycosylation is present at Ser2148. The EGF-like 37; calcium-binding domain occupies 2166–2205 (DTDECSVGNPCGNGTCKNVIGGFECTCEEGFEPGPMMTCE). N-linked (GlcNAc...) asparagine glycosylation is present at Asn2178. An EGF-like 38; calcium-binding domain is found at 2206-2246 (DINECAQNPLLCAFRCVNTYGSYECKCPVGYVLREDRRMCK). O-linked (Glc) serine glycosylation occurs at Ser2227. The 44-residue stretch at 2247–2290 (DEDECEEGKHDCTEKQMECKNLIGTYMCICGPGYQRRPDGEGCV) folds into the EGF-like 39; calcium-binding domain. The EGF-like 40; calcium-binding domain maps to 2291 to 2332 (DENECQTKPGICENGRCLNTRGSYTCECNDGFTASPNQDECL). Ser2313 is a glycosylation site (O-linked (Glc) serine). Positions 2337–2390 (GYCFTEVLQNMCQIGSSNRNPVTKSECCCDGGRGWGPHCEICPFQGTVAFKKLC) constitute a TB 9 domain. In terms of domain architecture, EGF-like 41; calcium-binding spans 2402 to 2443 (DIDECKVIHDVCRNGECVNDRGSYHCICKTGYTPDITGTSCV). Cystine bridges form between Cys2406–Cys2418, Cys2413–Cys2427, Cys2429–Cys2442, Cys2448–Cys2459, Cys2455–Cys2468, Cys2470–Cys2483, Cys2489–Cys2500, Cys2496–Cys2509, Cys2511–Cys2522, Cys2528–Cys2541, Cys2535–Cys2550, Cys2552–Cys2565, Cys2571–Cys2581, Cys2577–Cys2590, Cys2592–Cys2605, Cys2611–Cys2622, Cys2617–Cys2631, Cys2633–Cys2646, Cys2652–Cys2663, Cys2659–Cys2672, and Cys2674–Cys2686. In terms of domain architecture, EGF-like 42; calcium-binding spans 2444–2484 (DLNECNQAPKPCNFICKNTEGSYQCSCPKGYILQEDGRSCK). Residue Ser2465 is glycosylated (O-linked (Glc) serine). The region spanning 2485–2523 (DLDECATKQHNCQFLCVNTIGGFTCKCPPGFTQHHTSCI) is the EGF-like 43; calcium-binding domain. In terms of domain architecture, EGF-like 44; calcium-binding spans 2524–2566 (DNNECTSDINLCGSKGICQNTPGSFTCECQRGFSLDQTGSSCE). O-linked (Glc) serine glycosylation is present at Ser2547. Residues 2567 to 2606 (DVDECEGNHRCQHGCQNIIGGYRCSCPQGYLQHYQWNQCV) form the EGF-like 45; calcium-binding domain. The EGF-like 46; calcium-binding domain occupies 2607-2647 (DENECLSAHICGGASCHNTLGSYKCMCPAGFQYEQFSGGCQ). Ser2628 carries an O-linked (Glc) serine glycan. Positions 2648–2687 (DINECGSAQAPCSYGCSNTEGGYLCGCPPGYFRIGQGHCV) constitute an EGF-like 47; calcium-binding domain. Ser2702 is subject to Phosphoserine; by FAM20C. Phosphoserine is present on Ser2709. The segment at 2726–2746 (RGRKRRSTNETDASNIEDQSE) is disordered. Asn2734 carries N-linked (GlcNAc...) asparagine glycosylation. The span at 2735–2746 (ETDASNIEDQSE) shows a compositional bias: polar residues. N-linked (GlcNAc...) asparagine glycans are attached at residues Asn2750 and Asn2767.

It belongs to the fibrillin family. As to quaternary structure, interacts with COL16A1. Interacts with integrin alpha-V/beta-3. Interacts with ADAMTS10; this interaction promotes microfibril assembly. Interacts with THSD4; this interaction promotes fibril formation. Interacts (via N-terminal domain) with FBLN2 and FBLN5. Interacts with ELN. Forms a ternary complex with ELN and FBLN2 or FBLN5 and a significant interaction with ELN seen only in the presence of FBLN2 or FBLN5. Interacts (via N-terminal domain) with LTBP2 (via C-terminal domain) in a Ca(+2)-dependent manner. Interacts (via N-terminal domain) with LTBP1 (via C-terminal domain). Interacts with integrins ITGA5:ITGB1, ITGAV:ITGB3 and ITGAV:ITGB6. Interacts (via N-terminal domain) with BMP2, BMP4, BMP7, BMP10 and GDF5. Interacts (via N-terminal domain) with MFAP2 and MFAP5. Interacts with ADAMTSL5. Interacts with MFAP4. Interacts (via N-terminal domain) with TNFSF11 in a Ca(+2)-dependent manner. Interacts (via N-terminal domain) with EFEMP2; this interaction inhibits EFEMP2 binding to LOX and ELN. In terms of processing, cleavage of N- and C-terminus by furin is required for incorporation into the extracellular matrix and assembly into microfibrils. The C-terminus, which corresponds to the Asprosin chain, was initially thought to constitute a propeptide. Fibrillin-1 and Asprosin chains are still linked together during the secretion from cells, but are subsequently separated by furin, an essential step for incorporation of Fibrillin-1 into the nascent microfibrils. Post-translationally, forms intermolecular disulfide bonds either with other fibrillin-1 molecules or with other components of the microfibrils. O-glycosylated on serine residues by POGLUT2 and POGLUT3 which is necessary for efficient protein secretion.

Its subcellular location is the secreted. The protein localises to the extracellular space. It localises to the extracellular matrix. In terms of biological role, structural component of the 10-12 nm diameter microfibrils of the extracellular matrix, which conveys both structural and regulatory properties to load-bearing connective tissues. Fibrillin-1-containing microfibrils provide long-term force bearing structural support. In tissues such as the lung, blood vessels and skin, microfibrils form the periphery of the elastic fiber, acting as a scaffold for the deposition of elastin. In addition, microfibrils can occur as elastin-independent networks in tissues such as the ciliary zonule, tendon, cornea and glomerulus where they provide tensile strength and have anchoring roles. Fibrillin-1 also plays a key role in tissue homeostasis through specific interactions with growth factors, such as the bone morphogenetic proteins (BMPs), growth and differentiation factors (GDFs) and latent transforming growth factor-beta-binding proteins (LTBPs), cell-surface integrins and other extracellular matrix protein and proteoglycan components. Regulates osteoblast maturation by controlling TGF-beta bioavailability and calibrating TGF-beta and BMP levels, respectively. Negatively regulates osteoclastogenesis by binding and sequestering an osteoclast differentiation and activation factor TNFSF11. This leads to disruption of TNFSF11-induced Ca(2+) signaling and impairment of TNFSF11-mediated nuclear translocation and activation of transcription factor NFATC1 which regulates genes important for osteoclast differentiation and function. Mediates cell adhesion via its binding to cell surface receptors integrins ITGAV:ITGB3 and ITGA5:ITGB1. Binds heparin and this interaction has an important role in the assembly of microfibrils. Adipokine secreted by white adipose tissue that plays an important regulatory role in the glucose metabolism of liver, muscle and pancreas. Hormone that targets the liver in response to fasting to increase plasma glucose levels. Binds the olfactory receptor OR4M1 at the surface of hepatocytes and promotes hepatocyte glucose release by activating the protein kinase A activity in the liver, resulting in rapid glucose release into the circulation. May act as a regulator of adaptive thermogenesis by inhibiting browning and energy consumption, while increasing lipid deposition in white adipose tissue. Also acts as an orexigenic hormone that increases appetite: crosses the blood brain barrier and exerts effects on the hypothalamus. In the arcuate nucleus of the hypothalamus, asprosin directly activates orexigenic AgRP neurons and indirectly inhibits anorexigenic POMC neurons, resulting in appetite stimulation. Activates orexigenic AgRP neurons via binding to the olfactory receptor OR4M1. May also play a role in sperm motility in testis via interaction with OR4M1 receptor. The protein is Fibrillin-1 of Homo sapiens (Human).